Consider the following 624-residue polypeptide: Altered inheritance of mitochondria protein 9, mitochondrial (624 aa).

The N-terminal 34 residues, 1–34 (MLSRVARYSRTLNQLTRTSQGGLLSAVLRTSIRQ), are a transit peptide targeting the mitochondrion.

It belongs to the AIM9 family.

The protein localises to the mitochondrion. The chain is Altered inheritance of mitochondria protein 9, mitochondrial (AIM9) from Candida dubliniensis (strain CD36 / ATCC MYA-646 / CBS 7987 / NCPF 3949 / NRRL Y-17841) (Yeast).